The following is a 198-amino-acid chain: Glycerol-3-phosphate acyltransferase (198 aa).

The next 5 helical transmembrane spans lie at 6–26 (FLPV…GLVL), 56–78 (LAAG…AGYI), 83–101 (AAMA…PVWL), 113–133 (IGIL…LWLA), and 155–175 (FLWW…TLLL).

The protein belongs to the PlsY family. In terms of assembly, probably interacts with PlsX.

Its subcellular location is the cell inner membrane. It catalyses the reaction an acyl phosphate + sn-glycerol 3-phosphate = a 1-acyl-sn-glycero-3-phosphate + phosphate. The protein operates within lipid metabolism; phospholipid metabolism. Functionally, catalyzes the transfer of an acyl group from acyl-phosphate (acyl-PO(4)) to glycerol-3-phosphate (G3P) to form lysophosphatidic acid (LPA). This enzyme utilizes acyl-phosphate as fatty acyl donor, but not acyl-CoA or acyl-ACP. The chain is Glycerol-3-phosphate acyltransferase from Bradyrhizobium diazoefficiens (strain JCM 10833 / BCRC 13528 / IAM 13628 / NBRC 14792 / USDA 110).